Here is a 673-residue protein sequence, read N- to C-terminus: UvrABC system protein B (673 aa).

The Helicase ATP-binding domain occupies 30-417 (NSILLGNKYQ…SSVVVDQIIR (388 aa)). Residue 43–50 (GVTGSGKT) coordinates ATP. The Beta-hairpin motif lies at 96–119 (YYDYYQPESYVPSKDLFIEKEATI). Positions 434 to 600 (QMEDLYSEIQ…TIVKKIQNIL (167 aa)) constitute a Helicase C-terminal domain. Residues 627–662 (KKLIDKLKFDLEEAVNDERFEDAIVLRDKIKELSSK) form the UVR domain.

It belongs to the UvrB family. In terms of assembly, forms a heterotetramer with UvrA during the search for lesions. Interacts with UvrC in an incision complex.

The protein resides in the cytoplasm. Functionally, the UvrABC repair system catalyzes the recognition and processing of DNA lesions. A damage recognition complex composed of 2 UvrA and 2 UvrB subunits scans DNA for abnormalities. Upon binding of the UvrA(2)B(2) complex to a putative damaged site, the DNA wraps around one UvrB monomer. DNA wrap is dependent on ATP binding by UvrB and probably causes local melting of the DNA helix, facilitating insertion of UvrB beta-hairpin between the DNA strands. Then UvrB probes one DNA strand for the presence of a lesion. If a lesion is found the UvrA subunits dissociate and the UvrB-DNA preincision complex is formed. This complex is subsequently bound by UvrC and the second UvrB is released. If no lesion is found, the DNA wraps around the other UvrB subunit that will check the other stand for damage. In Borreliella burgdorferi (strain ATCC 35210 / DSM 4680 / CIP 102532 / B31) (Borrelia burgdorferi), this protein is UvrABC system protein B.